Consider the following 621-residue polypeptide: MATYETQGFKLNDSGRRIIVDPVTRIEGHMRCEVNLDANNVIRNAVSTGTMWRGLEVILKRADPADAWAFVERICRVCTGCHALASVRAVEDALGIKIPKNAHLIREMMAKTLQVHDHVVHFYHLHALDWVDVVSALNADPKRTSALQQTVSPAHPLSSPGYFRDVQIRLKKFVESGQLGPFMNGYWGNPAYKLPPEANLMAVTHYLEALDLQKEWVKIHTIFGGKNPHPNYLVGGMPCVDSNLDGSGAAGAPLNMERLNFVRARIEEAIEFVKNVYLPDVLAIGTIYKDAGWLYGGGLSALNVMDYGTYPRVNYDPTTDQLPGGAILNGNWDEIFPVDPRDPEQVQEFVAHSWYKYADETKGLHPWDGVTEPNFVLGPKAVGTPTDIKQLDEDAKYSWIKVAALAGHAMEVGPLVALHPRIRARAEDPKSYRAHYLREQVENSARAINTGIPQALGLKQTDYTVKQLLPTTIGRTLARALEAQYCGNMMLDDWHEMMANIKAGDLTTANVDKWEPSAWPKEAKGVGHVAAPRGACGHWIRIKDGKIENYQCVVPTTWNGSPRDSKGQIGAFEASLMNTPMAKPEEPVEILRTVHSFDPCLACSTHVIRPDGQERVVVKVR.

Residues Cys-75, Cys-78, Cys-600, and Cys-603 each coordinate Ni(2+).

This sequence belongs to the [NiFe]/[NiFeSe] hydrogenase large subunit family. As to quaternary structure, heterodimer of a large and a small subunit. Ni(2+) serves as cofactor.

The protein resides in the cell membrane. It carries out the reaction H2 + A = AH2. Functionally, this enzyme recycles the H(2) produced by nitrogenase to increase the production of ATP and to protect nitrogenase against inhibition or damage by O(2) under carbon- or phosphate-limited conditions. The protein is Uptake hydrogenase large subunit (hupL) of Alcaligenes hydrogenophilus.